Consider the following 370-residue polypeptide: Caffeic acid 3-O-methyltransferase (370 aa).

A propeptide spanning residues 1–2 is cleaved from the precursor; that stretch reads MG. A substrate-binding site is contributed by 135 to 141; sequence MNQDKVL. The substrate binding stretch occupies residues 167–185; the sequence is AFEYHGTDPRFNKVFNRGM. G213, D236, D256, M257, and K270 together coordinate S-adenosyl-L-methionine. Catalysis depends on H274, which acts as the Proton acceptor.

The protein belongs to the class I-like SAM-binding methyltransferase superfamily. Cation-independent O-methyltransferase family. COMT subfamily. As to quaternary structure, homodimer.

The enzyme catalyses (E)-caffeate + S-adenosyl-L-methionine = (E)-ferulate + S-adenosyl-L-homocysteine + H(+). It participates in aromatic compound metabolism; phenylpropanoid biosynthesis. Functionally, catalyzes the conversion of caffeic acid to ferulic acid and of 5-hydroxyferulic acid to sinapic acid. The resulting products may subsequently be converted to the corresponding alcohols that are incorporated into lignins. This Clarkia breweri (Fairy fans) protein is Caffeic acid 3-O-methyltransferase (COMT).